Consider the following 351-residue polypeptide: Peptidyl-Lys metalloendopeptidase (351 aa).

The first 22 residues, 1–22 (MFSLSSRFFLYSLCLSAVAVSA), serve as a signal peptide directing secretion. The propeptide occupies 23-183 (APGLSLSLSG…VARRSNLGKR (161 aa)). Disulfide bonds link C189–C259 and C261–C281. H301 lines the Zn(2+) pocket. E302 is an active-site residue. The Zn(2+) site is built by H305 and D314.

This sequence belongs to the peptidase M35 family. Zn(2+) is required as a cofactor.

It is found in the secreted. It carries out the reaction Preferential cleavage in proteins: -Xaa-|-Lys- (in which Xaa may be Pro).. Its activity is regulated as follows. Inhibited by chelating agents such as imidazole, alpha,alpha'-bipyridine, and 1,10-phenanthroline. The protein is Peptidyl-Lys metalloendopeptidase (MEP) of Armillaria mellea (Honey mushroom).